We begin with the raw amino-acid sequence, 315 residues long: Serine/threonine-protein phosphatase PP2A catalytic subunit 3 (315 aa).

Mn(2+)-binding residues include D62, H64, D90, and N122. H123 functions as the Proton donor in the catalytic mechanism. Positions 172 and 247 each coordinate Mn(2+). The disordered stretch occupies residues 294 to 315; sequence QFEPAPRENEPHTTRRVPDYFL. Basic and acidic residues predominate over residues 298–315; sequence APRENEPHTTRRVPDYFL. Residue L315 is modified to Leucine methyl ester.

It belongs to the PPP phosphatase family. PP-2A subfamily. It depends on Mn(2+) as a cofactor. In terms of processing, reversibly methyl esterified on Leu-315 by leucine carboxyl methyltransferase 1 (PPM1) and protein phosphatase methylesterase 1 (PPE1). Carboxyl methylation influences the affinity of the catalytic subunit for the different regulatory subunits, thereby modulating the PP2A holoenzyme's substrate specificity, enzyme activity and cellular localization.

The enzyme catalyses O-phospho-L-seryl-[protein] + H2O = L-seryl-[protein] + phosphate. The catalysed reaction is O-phospho-L-threonyl-[protein] + H2O = L-threonyl-[protein] + phosphate. The sequence is that of Serine/threonine-protein phosphatase PP2A catalytic subunit 3 (Ppn3) from Paramecium tetraurelia.